The following is a 2134-amino-acid chain: Tudor domain-containing protein 6 (2134 aa).

A disordered region spans residues 287-315 (RAPVGTDDEDSGSATWEEREESPDKPGSP). Threonine 292 is subject to Phosphothreonine. Tudor domains follow at residues 309-368 (PDKP…YFRM), 542-599 (RPEP…FRQL), 820-879 (YEGD…FFQV), and 1038-1092 (TLAP…AHDV). The tract at residues 1271-1296 (SPMSGTKLDSALPERRMGEPSGRDLP) is disordered. Residues 1282–1296 (LPERRMGEPSGRDLP) are compositionally biased toward basic and acidic residues. Tudor domains follow at residues 1358 to 1417 (QWQS…DAVL) and 1570 to 1630 (CPQI…LLLV). 2 disordered regions span residues 1699–1733 (KKYAKTGVPKNDLSSEKRGPERKGSLASPDLGLKK) and 1860–1885 (LQHSPAGEEEKEELGLGSPMAPLSPG). The segment covering 1711–1722 (LSSEKRGPERKG) has biased composition (basic and acidic residues). 2 positions are modified to phosphoserine: serine 1723 and serine 1726. Residue serine 1925 is modified to Phosphoserine. Polar residues predominate over residues 1930 to 1939 (AVSQDIQGSR). The segment at 1930–1985 (AVSQDIQGSRCSEDERKAGYMGSSDDDHSRSPLLQHGKGGNSPAHDGRNLSEEEFP) is disordered. A phosphoserine mark is found at serine 1980, serine 2063, and serine 2115.

In terms of assembly, found in a mRNP complex (i.e. messenger ribonucleoproteins which correspond to mRNA with bound proteins), at least composed of TDRD1, TDRD6, TDRD7 and DDX4. Found in a complex, at least composed of PIWIL1, PIWIL2, DDX4 and TDRD6. Interacts with Tex19.1 and probably Tex19.2. Interacts with PRMT5. Interacts with SNRPB (when methylated); to trigger spliceosome formation. In terms of processing, undergoes proteolytic cleavage near the C-terminal by an unknown protease during the transition from meiosis I to meiosis II in primary spermatocytes. Testis specific. Expressed in primary spermatocytes at post natal (PN) day 17.5. Expressed in midpachytene stage of primary spermatocytes at PN16 and in round spermatids at PN22 (at protein level).

It localises to the cytoplasm. Tudor domain-containing protein involved in germ cell development, more specifically the formation of chromatoid body (during spermiogenesis), Balbiani body (during oogenesis), germ plasm (upon fertilization), and for proper miRNA expression and spliceosome maturation. Essential for RNA-dependent helicase UPF1 localization to chromatoid body, for UPF1-UPF2 and UPF1-DDX4 interactions which are required for mRNA degradation, using the extended 3' UTR-triggered nonsense-mediated mRNA decay (NMD) pathway. Involved in spliceosome maturation and mRNA splicing in prophase I spermatocytes through interaction with arginine N-methyltransferase PRMT5 and symmetrically arginine dimethylated SNRPB (small nuclear ribonucleoprotein-associated protein). The polypeptide is Tudor domain-containing protein 6 (Mus musculus (Mouse)).